The following is a 491-amino-acid chain: Aspartyl/glutamyl-tRNA(Asn/Gln) amidotransferase subunit B (491 aa).

Belongs to the GatB/GatE family. GatB subfamily. In terms of assembly, heterotrimer of A, B and C subunits.

The catalysed reaction is L-glutamyl-tRNA(Gln) + L-glutamine + ATP + H2O = L-glutaminyl-tRNA(Gln) + L-glutamate + ADP + phosphate + H(+). It carries out the reaction L-aspartyl-tRNA(Asn) + L-glutamine + ATP + H2O = L-asparaginyl-tRNA(Asn) + L-glutamate + ADP + phosphate + 2 H(+). Functionally, allows the formation of correctly charged Asn-tRNA(Asn) or Gln-tRNA(Gln) through the transamidation of misacylated Asp-tRNA(Asn) or Glu-tRNA(Gln) in organisms which lack either or both of asparaginyl-tRNA or glutaminyl-tRNA synthetases. The reaction takes place in the presence of glutamine and ATP through an activated phospho-Asp-tRNA(Asn) or phospho-Glu-tRNA(Gln). This chain is Aspartyl/glutamyl-tRNA(Asn/Gln) amidotransferase subunit B, found in Burkholderia cenocepacia (strain HI2424).